The following is a 174-amino-acid chain: Large ribosomal subunit protein uL18 (174 aa).

The protein belongs to the universal ribosomal protein uL18 family. As to quaternary structure, part of the 50S ribosomal subunit. Contacts the 5S and 23S rRNAs.

This is one of the proteins that bind and probably mediate the attachment of the 5S RNA into the large ribosomal subunit, where it forms part of the central protuberance. This Methanosarcina mazei (strain ATCC BAA-159 / DSM 3647 / Goe1 / Go1 / JCM 11833 / OCM 88) (Methanosarcina frisia) protein is Large ribosomal subunit protein uL18.